The primary structure comprises 503 residues: Trehalose-6-phosphate synthase (503 aa).

A compositionally biased stretch (polar residues) spans 1–14 (MTDQSGNGVRSGSA). A disordered region spans residues 1–20 (MTDQSGNGVRSGSASEAPPS). D-glucose 6-phosphate is bound at residue R31. 51–52 (GG) is a binding site for UDP-alpha-D-glucose. D-glucose 6-phosphate is bound by residues Y109 and D163. UDP-alpha-D-glucose-binding residues include R305 and K310. R343 is a D-glucose 6-phosphate binding site. 408-412 (LVAKE) serves as a coordination point for UDP-alpha-D-glucose.

The protein belongs to the glycosyltransferase 20 family. Homotetramer.

It catalyses the reaction ADP-alpha-D-glucose + D-glucose 6-phosphate = alpha,alpha-trehalose 6-phosphate + ADP + H(+). The enzyme catalyses CDP-alpha-D-glucose + D-glucose 6-phosphate = alpha,alpha-trehalose 6-phosphate + CDP + H(+). The catalysed reaction is GDP-alpha-D-glucose + D-glucose 6-phosphate = alpha,alpha-trehalose 6-phosphate + GDP + H(+). It carries out the reaction TDP-alpha-D-glucose + D-glucose 6-phosphate = 5-methyl-UDP + alpha,alpha-trehalose 6-phosphate + H(+). It catalyses the reaction D-glucose 6-phosphate + UDP-alpha-D-glucose = alpha,alpha-trehalose 6-phosphate + UDP + H(+). It participates in glycan biosynthesis; trehalose biosynthesis. Its function is as follows. Probably involved in the osmoprotection via the biosynthesis of trehalose and in the production of glycogen and alpha-glucan via the TreS-Pep2 branch involved in the biosynthesis of maltose-1-phosphate (M1P). Catalyzes the transfer of glucose from UDP-glucose (UDP-Glc) to D-glucose 6-phosphate (Glc-6-P) to form trehalose-6-phosphate. Probably also able to use ADP-Glc, CDP-Glc, GDP-Glc and TDP-Glc as glucosyl donors. The polypeptide is Trehalose-6-phosphate synthase (Mycolicibacterium gilvum (strain PYR-GCK) (Mycobacterium gilvum (strain PYR-GCK))).